A 75-amino-acid chain; its full sequence is Notewaprin-b (75 aa).

A signal peptide spans 1-24; the sequence is MSSGGLLLLLGLLTLWAELTPVSS. A WAP domain is found at 27–72; sequence RPKKPGLCPPRPQKPPCVRECKNDWICPGEQKCCRYGCIYECRDPI. Intrachain disulfides connect cysteine 34-cysteine 60, cysteine 43-cysteine 64, cysteine 47-cysteine 59, and cysteine 53-cysteine 68.

Belongs to the venom waprin family. As to expression, expressed by the venom gland.

The protein localises to the secreted. In terms of biological role, damages membranes of susceptible bacteria. Has no hemolytic activity. Not toxic to mice. Does not inhibit the proteinases elastase and cathepsin G. The protein is Notewaprin-b of Notechis scutatus scutatus (Mainland tiger snake).